The following is a 271-amino-acid chain: MVLIKEFRVVLPCSVQEYQVGQLYSVAEASKNETGGGEGIEVLKNEPYEKDGEKGQYTHKIYHLKSKVPAFVRMIAPEGSLVFHEKAWNAYPYCRTIVTNEYMKDDFFIKIETWHKPDLGTLENVHGLDPNTWKTVEIVHIDIADRSQVEPADYKADEDPALFQSVKTKRGPLGPNWKKELANNPDCPQMCAYKLVTIKFKWWGLQSKVENFIQKQEKRIFTNFHRQLFCWIDKWIDLTMEDIRRMEDETQKELETMRKKGSVRGTSAADV.

Position 215 is an N6-acetyllysine (Lys-215). Ser-262 is modified (phosphoserine).

It belongs to the PtdIns transfer protein family. PI transfer class I subfamily. Post-translationally, constitutive phosphorylation of Ser-262 has no effect on phospholipid transfer activity but is required for Golgi targeting.

It is found in the golgi apparatus. Its subcellular location is the golgi apparatus membrane. It localises to the endoplasmic reticulum membrane. The catalysed reaction is a 1,2-diacyl-sn-glycero-3-phosphocholine(in) = a 1,2-diacyl-sn-glycero-3-phosphocholine(out). The enzyme catalyses a 1,2-diacyl-sn-glycero-3-phospho-(1D-myo-inositol)(in) = a 1,2-diacyl-sn-glycero-3-phospho-(1D-myo-inositol)(out). It carries out the reaction an N-(acyl)-sphingosylphosphocholine(in) = an N-(acyl)-sphingosylphosphocholine(out). In terms of biological role, catalyzes the transfer of phosphatidylinositol, phosphatidylcholine and sphingomyelin between membranes. Required for COPI-mediated retrograde transport from the Golgi to the endoplasmic reticulum; phosphatidylinositol and phosphatidylcholine transfer activity is essential for this function. This Bos taurus (Bovine) protein is Phosphatidylinositol transfer protein beta isoform (PITPNB).